Here is a 286-residue protein sequence, read N- to C-terminus: Aquaporin PIP1-3 (286 aa).

Met1 is subject to N-acetylmethionine. The segment at 1–33 is disordered; that stretch reads MEGKEEDVRVGANKFPERQPIGTSAQTDKDYKE. Residues 1–54 lie on the Cytoplasmic side of the membrane; the sequence is MEGKEEDVRVGANKFPERQPIGTSAQTDKDYKEPPPAPFFEPGELSSWSFYRAG. Residues 55–75 traverse the membrane as a helical segment; sequence IAEFIATFLFLYITVLTVMGV. Topologically, residues 76 to 81 are extracellular; it reads KRAPNM. The chain crosses the membrane as a helical span at residues 82 to 102; sequence CASVGIQGIAWAFGGMIFALV. Topologically, residues 103 to 132 are cytoplasmic; the sequence is YCTAGISGGHINPAVTFGLFLARKLSLTRA. The NPA 1 motif lies at 114–116; it reads NPA. A helical membrane pass occupies residues 133–153; it reads VFYIVMQCLGAICGAGVVKGF. Residues 154 to 174 lie on the Extracellular side of the membrane; the sequence is QPNPYQTLGGGANTVAHGYTK. Residues 175–195 traverse the membrane as a helical segment; the sequence is GSGLGAEIIGTFVLVYTVFSA. Over 196-208 the chain is Cytoplasmic; sequence TDAKRSARDSHVP. The chain crosses the membrane as a helical span at residues 209–229; the sequence is ILAPLPIGFAVFLVHLATIPI. The Extracellular portion of the chain corresponds to 230 to 256; sequence TGTGINPARSLGAAIIYNKDHAWDDHW. Residues 235 to 237 carry the NPA 2 motif; that stretch reads NPA. Residues 257-277 traverse the membrane as a helical segment; that stretch reads IFWVGPFIGAALAALYHQLVI. At 278–286 the chain is on the cytoplasmic side; sequence RAIPFKSRS. Ser284 carries the post-translational modification Phosphoserine.

It belongs to the MIP/aquaporin (TC 1.A.8) family. PIP (TC 1.A.8.11) subfamily. Expressed in roots, above ground, ripening fruit, flower buds, green siliques and senescing leaves.

It is found in the cell membrane. Water channel required to facilitate the transport of water across cell membrane. Its function is impaired by Hg(2+). This Arabidopsis thaliana (Mouse-ear cress) protein is Aquaporin PIP1-3 (PIP1-3).